Reading from the N-terminus, the 612-residue chain is uncharacterized protein (612 aa).

Residues alanine 213–arginine 238 form a disordered region. The region spanning aspartate 421–leucine 610 is the VWFA domain.

It is found in the cytoplasm. Functionally, component of the anaerobic respiratory chain that transforms nitrate to dinitrogen (denitrification). Function unknown, but essential for the denitrification process. This is an uncharacterized protein from Pseudomonas aeruginosa (strain ATCC 15692 / DSM 22644 / CIP 104116 / JCM 14847 / LMG 12228 / 1C / PRS 101 / PAO1).